Here is a 552-residue protein sequence, read N- to C-terminus: Acyl-CoA synthetase FUM10 (552 aa).

183 to 194 (ELFTSGTTGAPK) contributes to the AMP binding site. Residues 463-536 (EIEHVARLHD…QEIPYNRTGK (74 aa)) are AMP-binding.

The protein belongs to the ATP-dependent AMP-binding enzyme family.

It functions in the pathway mycotoxin biosynthesis. In terms of biological role, acyl-CoA synthetase; part of the gene cluster that mediates the biosynthesis of fumonisins B1 (FB1), B2 (FB2), B3 (FB3), and B4 (FB4), which are carcinogenic mycotoxins. Within the pathway, FUM10 is involved the addition of the tricarballylic moieties to the carbon backbone. FUM10 catalyzes the CoA activation of citrate to form tricarballylic acid. The biosynthesis starts with the FUM1-catalyzed carbon chain assembly from one molecule of acetyl-CoA, eight molecules of malonyl-CoA, and two molecules of methionine (in S-adenosyl form). The C18 polyketide chain is released from the enzyme by a nucleophilic attack of a carbanion, which is derived from R-carbon of alanine by decarboxylation, on the carbonyl carbon of polyketide acyl chain. This step is catalyzed by the pyridoxal 5'-phosphate-dependent aminoacyl transferase FUM8. The resultant 3-keto intermediate is then stereospecifically reduced to a 3-hydroxyl product by reductase FUM13. Subsequent oxidations at C-10 by the cytochrome P450 monooxygenase FUM2, C-14 and C-15 by FUM6, FUM12 or FUM15, tricarballylic esterification of the hydroxyl groups on C-14 and C-15 by acyltransferase FUM14, and C-5 hydroxylation by 2-keto-glutarate-dependent dioxygenase FUM3 furnish the biosynthesis of fumonisins. The tricarballylic moieties are most likely derived from the citric acid cycle, and their addition to the carbon backbone may involve FUM7, FUM10, FUM11 and FUM14. The polypeptide is Acyl-CoA synthetase FUM10 (Gibberella moniliformis (strain M3125 / FGSC 7600) (Maize ear and stalk rot fungus)).